The following is a 177-amino-acid chain: UPF0178 protein TP_0845 (177 aa).

Residues 155–177 (EAKTGEEQCDWPSAQGKSQTGRR) form a disordered region.

This sequence belongs to the UPF0178 family.

The protein is UPF0178 protein TP_0845 of Treponema pallidum (strain Nichols).